The primary structure comprises 387 residues: Thermostable celloxylanase (387 aa).

Positions A41–P382 constitute a GH10 domain. E185 acts as the Proton donor in catalysis. The active-site Nucleophile is E293.

Belongs to the glycosyl hydrolase 10 (cellulase F) family.

It carries out the reaction Endohydrolysis of (1-&gt;4)-beta-D-glucosidic linkages in cellulose, lichenin and cereal beta-D-glucans.. The catalysed reaction is Endohydrolysis of (1-&gt;4)-beta-D-xylosidic linkages in xylans.. It functions in the pathway glycan degradation; xylan degradation. Active toward xylan, carboxymethylcellulose, P-nitrophenyl-beta-D-xylopyranoside and P-nitrophenyl-beta-D-cellobioside. This Thermoclostridium stercorarium (Clostridium stercorarium) protein is Thermostable celloxylanase (xynB).